A 213-amino-acid chain; its full sequence is Isopentenyl-diphosphate Delta-isomerase (213 aa).

Residues 1–10 (MRDSMSEADR) are compositionally biased toward basic and acidic residues. Positions 1-34 (MRDSMSEADRSSPGSGKTDREDETAENATQDVIA) are disordered. The Mn(2+) site is built by His51, His58, and His95. The Nudix hydrolase domain occupies 56-193 (VRHRAFTCLL…RQLRLCPWFE (138 aa)). Glu113 serves as a coordination point for Mg(2+). Residues Glu142 and Glu144 each contribute to the Mn(2+) site. Glu144 is an active-site residue.

Belongs to the IPP isomerase type 1 family. It depends on Mg(2+) as a cofactor. Requires Mn(2+) as cofactor.

The protein resides in the cytoplasm. The enzyme catalyses isopentenyl diphosphate = dimethylallyl diphosphate. Its pathway is isoprenoid biosynthesis; dimethylallyl diphosphate biosynthesis; dimethylallyl diphosphate from isopentenyl diphosphate: step 1/1. Its function is as follows. Catalyzes the 1,3-allylic rearrangement of the homoallylic substrate isopentenyl (IPP) to its highly electrophilic allylic isomer, dimethylallyl diphosphate (DMAPP). The chain is Isopentenyl-diphosphate Delta-isomerase from Halobacterium salinarum (strain ATCC 700922 / JCM 11081 / NRC-1) (Halobacterium halobium).